A 527-amino-acid chain; its full sequence is Glucose-6-phosphate isomerase (527 aa).

The Proton donor role is filled by glutamate 323. Residues histidine 352 and lysine 454 contribute to the active site.

This sequence belongs to the GPI family.

It localises to the cytoplasm. It carries out the reaction alpha-D-glucose 6-phosphate = beta-D-fructose 6-phosphate. The protein operates within carbohydrate biosynthesis; gluconeogenesis. It participates in carbohydrate degradation; glycolysis; D-glyceraldehyde 3-phosphate and glycerone phosphate from D-glucose: step 2/4. Its function is as follows. Catalyzes the reversible isomerization of glucose-6-phosphate to fructose-6-phosphate. This is Glucose-6-phosphate isomerase from Prochlorococcus marinus (strain MIT 9301).